The chain runs to 483 residues: Cysteine--tRNA ligase (483 aa).

Zn(2+) is bound at residue C27. The 'HIGH' region motif lies at 29 to 39; the sequence is ITAYDYCHIGH. The Zn(2+) site is built by C208, H231, and E235. The 'KMSKS' region motif lies at 263–267; it reads KMSKS. K266 contacts ATP.

This sequence belongs to the class-I aminoacyl-tRNA synthetase family. As to quaternary structure, monomer. It depends on Zn(2+) as a cofactor.

The protein localises to the cytoplasm. It carries out the reaction tRNA(Cys) + L-cysteine + ATP = L-cysteinyl-tRNA(Cys) + AMP + diphosphate. This is Cysteine--tRNA ligase from Desulfovibrio desulfuricans (strain ATCC 27774 / DSM 6949 / MB).